We begin with the raw amino-acid sequence, 97 residues long: Sperm-associated acrosin inhibitor (97 aa).

Residues 1–26 (MAFFSSRVRALFILVLVLPLCSETGF) form the signal peptide. In terms of domain architecture, Kazal-like spans 32–90 (TRKEPDCDVYRSHLFFCTREMDPICGTNGKSYANPCIFCSEKLGRNEKFDFGHWGHCRE). Intrachain disulfides connect Cys-38–Cys-70, Cys-48–Cys-67, and Cys-56–Cys-88.

In terms of tissue distribution, seminal plasma.

The protein localises to the secreted. Its function is as follows. Inhibits acrosin. The protein is Sperm-associated acrosin inhibitor of Sus scrofa (Pig).